A 257-amino-acid chain; its full sequence is AT-hook motif nuclear-localized protein 16 (257 aa).

Positions 1–71 (MAGGTALTPT…SKNKPKPPII (71 aa)) are disordered. The a.T hook DNA-binding region spans 53–65 (KRPRGRPAGSKNK). Residues 77–214 (PNSLRANAVE…DEAASMQNQQ (138 aa)) form the PPC domain.

Interacts with FVE/MSI4 and MSI5 which are components of HDAC corepressor complexes. In terms of tissue distribution, preferentially expressed in the inflorescence meristem and young floral buds, as well as in seedling-stage vegetative meristems. Widely expressed in flowers, roots and stems, with relatively low expression in leaves.

Its subcellular location is the nucleus. Functionally, transcription factor that specifically binds AT-rich DNA sequences related to the nuclear matrix attachment regions (MARs). Encodes a nuclear matrix protein that acts in the maintenance of genomic integrity by silencing TEs and repeat-containing genes through epigenetic machinery. Acts as a chromatin remodeling factor that modifies the architecture of FLC and FWA chromatin by modulating both H3 acetylation and methylation leading to the regulation of FLC and FWA expression. Negatively regulates floral repressors including MAF4 and MAF5. Plays a transcription activation role in anther development. Regulates the expression of arabinogalactan proteins (AGPs) involved in the formation of the nexine layer of the pollen wall. Binds AGP6, AGP11, AGP23 and AGP40 promoters. The sequence is that of AT-hook motif nuclear-localized protein 16 from Arabidopsis thaliana (Mouse-ear cress).